The primary structure comprises 204 residues: MEAQAQGLLETEPLQGTDEDAVASADFSSMLSEEEKEELKAELVQLEDEITTLRQVLSAKERHLVEIKQKLGMNLMNELKQNFSKSWHDMQTTTAYKKTHETLSHAGQKATAAFSNVGTAISKKFGDMSYSIRHSISMPAMRNSPTFKSFEERVETTVTSLKTKVGGTNPNGGSFEEVLSSTAHASAQSLAGGSRRTKEEELQC.

Residues 1–20 (MEAQAQGLLETEPLQGTDED) form a disordered region. Residues 22–73 (VASADFSSMLSEEEKEELKAELVQLEDEITTLRQVLSAKERHLVEIKQKLGM) adopt a coiled-coil conformation. 4 positions are modified to phosphoserine: Ser-29, Ser-86, Ser-122, and Ser-131. Arg-133 carries the omega-N-methylarginine modification. The residue at position 146 (Thr-146) is a Phosphothreonine. Ser-149 and Ser-174 each carry phosphoserine.

Belongs to the TPD52 family. As to quaternary structure, forms a homodimer or heterodimer with other members of the family.

The sequence is that of Tumor protein D53 (TPD52L1) from Homo sapiens (Human).